We begin with the raw amino-acid sequence, 239 residues long: Ribosomal RNA small subunit methyltransferase G (239 aa).

S-adenosyl-L-methionine is bound by residues Gly78, Phe83, 129 to 130 (AE), and Arg148.

It belongs to the methyltransferase superfamily. RNA methyltransferase RsmG family.

It localises to the cytoplasm. Functionally, specifically methylates the N7 position of a guanine in 16S rRNA. This Clostridium botulinum (strain Kyoto / Type A2) protein is Ribosomal RNA small subunit methyltransferase G.